Consider the following 223-residue polypeptide: Putative N-acetylmannosamine-6-phosphate 2-epimerase (223 aa).

The protein belongs to the NanE family.

The catalysed reaction is an N-acyl-D-glucosamine 6-phosphate = an N-acyl-D-mannosamine 6-phosphate. It functions in the pathway amino-sugar metabolism; N-acetylneuraminate degradation; D-fructose 6-phosphate from N-acetylneuraminate: step 3/5. In terms of biological role, converts N-acetylmannosamine-6-phosphate (ManNAc-6-P) to N-acetylglucosamine-6-phosphate (GlcNAc-6-P). The chain is Putative N-acetylmannosamine-6-phosphate 2-epimerase from Clostridioides difficile (strain 630) (Peptoclostridium difficile).